We begin with the raw amino-acid sequence, 406 residues long: Arginine deiminase (406 aa).

Residue C396 is the Amidino-cysteine intermediate of the active site.

It belongs to the arginine deiminase family.

It localises to the cytoplasm. It catalyses the reaction L-arginine + H2O = L-citrulline + NH4(+). Its pathway is amino-acid degradation; L-arginine degradation via ADI pathway; carbamoyl phosphate from L-arginine: step 1/2. This chain is Arginine deiminase, found in Vibrio vulnificus (strain CMCP6).